The following is a 424-amino-acid chain: Satellite RNA 48 kDa protein (424 aa).

Residues 15-78 (TQTRPRIVPK…SNNPGRPSRK (64 aa)) are disordered. 2 stretches are compositionally biased toward polar residues: residues 31–42 (RTYSRPRSSLSD) and 62–73 (NGSQGRCSNNPG).

The protein belongs to the nepovirus satellite RNA 48 kDa protein family.

In Allium porrum (Leek), this protein is Satellite RNA 48 kDa protein.